We begin with the raw amino-acid sequence, 434 residues long: Glucose-1-phosphate adenylyltransferase (434 aa).

Alpha-D-glucose 1-phosphate contacts are provided by residues tyrosine 112, glycine 178, 193 to 194, and serine 211; that span reads EK.

Belongs to the bacterial/plant glucose-1-phosphate adenylyltransferase family. In terms of assembly, homotetramer.

The catalysed reaction is alpha-D-glucose 1-phosphate + ATP + H(+) = ADP-alpha-D-glucose + diphosphate. It functions in the pathway glycan biosynthesis; glycogen biosynthesis. Its function is as follows. Involved in the biosynthesis of ADP-glucose, a building block required for the elongation reactions to produce glycogen. Catalyzes the reaction between ATP and alpha-D-glucose 1-phosphate (G1P) to produce pyrophosphate and ADP-Glc. In Mannheimia succiniciproducens (strain KCTC 0769BP / MBEL55E), this protein is Glucose-1-phosphate adenylyltransferase.